The chain runs to 528 residues: Purine-cytosine permease FCY21 (528 aa).

Over 1 to 90 the chain is Cytoplasmic; that stretch reads MPQTHEMSLN…DDSILNAASM (90 aa). Ser43 is subject to Phosphoserine. Residue Thr46 is modified to Phosphothreonine. Residues 91–111 traverse the membrane as a helical segment; that stretch reads WFSANMVLPAYAIGALGPMVF. The Extracellular segment spans residues 112 to 118; that stretch reads DLNFGQS. A helical membrane pass occupies residues 119-139; it reads VFVIIFFNLLGLVSVAFFSVF. Residues 140-161 lie on the Cytoplasmic side of the membrane; that stretch reads GAELGLRQMILSRYLVGNIAAR. Residues 162–182 form a helical membrane-spanning segment; that stretch reads IFSFINFIACIGWGIVNTVAS. Over 183-198 the chain is Extracellular; it reads SQVLNMVNPGHQCPLW. The chain crosses the membrane as a helical span at residues 199–219; the sequence is AGCIVIIGATVIVTFFGYGVI. Topologically, residues 220 to 221 are cytoplasmic; it reads HA. Residues 222–242 form a helical membrane-spanning segment; the sequence is YEKWAWVPNFAVFLVIIARLA. At 243–260 the chain is on the extracellular side; that stretch reads RSKKFVLGEWTSGPTTAG. The chain crosses the membrane as a helical span at residues 261–281; it reads NVLSFGSTVYGFAAGWTTYAA. Over 282–295 the chain is Cytoplasmic; it reads DYTVYMPRKTNKYK. Residues 296-316 traverse the membrane as a helical segment; that stretch reads IFFSLVVGLATPLYFTMILGA. Over 317 to 340 the chain is Extracellular; sequence AVAMAAIGDPAWKTYYDENSIGGL. The helical transmembrane segment at 341–361 threads the bilayer; sequence TFAVLVPNSVHGFGQFCCVLL. The Cytoplasmic portion of the chain corresponds to 362-393; sequence SLSTIANNVPNMYTIALSVQATWEPLAKVPRV. A helical membrane pass occupies residues 394-414; it reads IWTLLGNAAALGIAIPACYYF. Residues 415-416 lie on the Extracellular side of the membrane; sequence ST. Residues 417 to 437 form a helical membrane-spanning segment; sequence FMNYFMDSIGYYLAIYIAIAC. Over 438-460 the chain is Cytoplasmic; sequence SEHFIYRRSFSAYNVDDWDSWER. A helical transmembrane segment spans residues 461–481; it reads LPIGIAGTAALIVGAFGVALG. The Extracellular segment spans residues 482 to 493; sequence MCQTYWVGEISR. A helical transmembrane segment spans residues 494–514; the sequence is LIGDYGGDIGFELGLSWAFIV. Over 515–528 the chain is Cytoplasmic; that stretch reads YNIARPFELKYFGR.

This sequence belongs to the purine-cytosine permease (2.A.39) family.

The protein localises to the membrane. Its function is as follows. Probable purine-cytosine permease. In Saccharomyces cerevisiae (strain ATCC 204508 / S288c) (Baker's yeast), this protein is Purine-cytosine permease FCY21 (FCY21).